The sequence spans 288 residues: Glucose-1-phosphate thymidylyltransferase (288 aa).

Mg(2+) contacts are provided by Asp-108 and Asp-223.

This sequence belongs to the glucose-1-phosphate thymidylyltransferase family. As to quaternary structure, homotetramer. It depends on Mg(2+) as a cofactor.

The enzyme catalyses dTTP + alpha-D-glucose 1-phosphate + H(+) = dTDP-alpha-D-glucose + diphosphate. Catalyzes the formation of dTDP-glucose, from dTTP and glucose 1-phosphate, as well as its pyrophosphorolysis. This is Glucose-1-phosphate thymidylyltransferase (rmlA) from Neisseria gonorrhoeae.